Here is a 558-residue protein sequence, read N- to C-terminus: MPTDIEIARAATLQPISAIAEKIGIPDAALHPHGRHIAKIDHAHIASLEAKPEGKLILVTAISPTPAGEGKTTTTVGLGDALNRIGKKAVICLREPSLGPCFGMKGGAAGGGKSQVVPMEAINLHFTGDFHAITSAHSLAAALIDNHVYWGNELNIDVRRIAWRRVVDMNDRALRSITQSLGGVANGYPREDGFDITVASEVMAVFCLARDLADLEARLGRIVVAETRDRKAVTLADLKATGAMAVLLKDALQPNLVQTLEGSPALIHGGPFANIAHGCNSVIATRTGLRLGEYAVTEAGFGADLGAEKFIDIKCRQTGLSPSAVVIVATLRALKMHGGVEKKALGTENIAALEKGFVNLARHVENVRRFGLPVVVAVNHFHTDTEAELATLKALCRDKLDVEAITCRHWAEGGAGAEELARAVVALAEGGAPKTPNFVYPEDAKLTDKIRTIAQTLYGAADIQVESKAATKLAQFEKDGYGKLPVCMAKTQYSFSTDPNLMGAPSGHVVAVRDVRLSAGAGFVVVICGEIMTMPGLPKVPAAEGIHLDANGQIEGLF.

65 to 72 (TPAGEGKT) is a binding site for ATP.

This sequence belongs to the formate--tetrahydrofolate ligase family.

It catalyses the reaction (6S)-5,6,7,8-tetrahydrofolate + formate + ATP = (6R)-10-formyltetrahydrofolate + ADP + phosphate. It functions in the pathway one-carbon metabolism; tetrahydrofolate interconversion. The polypeptide is Formate--tetrahydrofolate ligase (Methylobacterium nodulans (strain LMG 21967 / CNCM I-2342 / ORS 2060)).